We begin with the raw amino-acid sequence, 229 residues long: Potassium/proton antiporter CemA (229 aa).

Helical transmembrane passes span 7–27, 114–134, 154–174, and 189–209; these read FTPL…SLSF, IICF…LVIL, ILLL…ELMV, and IISG…KYWI.

This sequence belongs to the CemA family.

It localises to the plastid. Its subcellular location is the chloroplast inner membrane. It carries out the reaction K(+)(in) + H(+)(out) = K(+)(out) + H(+)(in). Contributes to K(+)/H(+) antiport activity by supporting proton efflux to control proton extrusion and homeostasis in chloroplasts in a light-dependent manner to modulate photosynthesis. Prevents excessive induction of non-photochemical quenching (NPQ) under continuous-light conditions. Indirectly promotes efficient inorganic carbon uptake into chloroplasts. The protein is Potassium/proton antiporter CemA of Coffea arabica (Arabian coffee).